The chain runs to 511 residues: Bifunctional purine biosynthesis protein PurH (511 aa).

Residues 1 to 145 form the MGS-like domain; that stretch reads MKKRALVSVS…KNHKFVSVIV (145 aa).

This sequence belongs to the PurH family.

The enzyme catalyses (6R)-10-formyltetrahydrofolate + 5-amino-1-(5-phospho-beta-D-ribosyl)imidazole-4-carboxamide = 5-formamido-1-(5-phospho-D-ribosyl)imidazole-4-carboxamide + (6S)-5,6,7,8-tetrahydrofolate. It catalyses the reaction IMP + H2O = 5-formamido-1-(5-phospho-D-ribosyl)imidazole-4-carboxamide. The protein operates within purine metabolism; IMP biosynthesis via de novo pathway; 5-formamido-1-(5-phospho-D-ribosyl)imidazole-4-carboxamide from 5-amino-1-(5-phospho-D-ribosyl)imidazole-4-carboxamide (10-formyl THF route): step 1/1. It functions in the pathway purine metabolism; IMP biosynthesis via de novo pathway; IMP from 5-formamido-1-(5-phospho-D-ribosyl)imidazole-4-carboxamide: step 1/1. The sequence is that of Bifunctional purine biosynthesis protein PurH from Bacillus cereus (strain ZK / E33L).